The chain runs to 132 residues: MAKEFSRTQRVAQEMQKEIAIIIQREVKDPRIGMATVSGVEVSRDLAYAKVFVTFLNDNEPEQVKIAVKALQDASGFIRMMIGKAMRLRVVPELTFSYDNSLVEGMRMSNLVTNVVRNDTERRSVTGEDQED.

This sequence belongs to the RbfA family. In terms of assembly, monomer. Binds 30S ribosomal subunits, but not 50S ribosomal subunits or 70S ribosomes.

The protein resides in the cytoplasm. One of several proteins that assist in the late maturation steps of the functional core of the 30S ribosomal subunit. Associates with free 30S ribosomal subunits (but not with 30S subunits that are part of 70S ribosomes or polysomes). Required for efficient processing of 16S rRNA. May interact with the 5'-terminal helix region of 16S rRNA. The protein is Ribosome-binding factor A of Pectobacterium atrosepticum (strain SCRI 1043 / ATCC BAA-672) (Erwinia carotovora subsp. atroseptica).